Reading from the N-terminus, the 132-residue chain is Binder of sperm protein homolog 1 (132 aa).

An N-terminal signal peptide occupies residues 1 to 17 (MGSLMLLFVETTRNSSA). Fibronectin type-II domains are found at residues 40–84 (VTDG…FCSA) and 85–132 (EDFA…KYCE). 4 disulfides stabilise this stretch: Cys-45–Cys-69, Cys-59–Cys-82, Cys-90–Cys-116, and Cys-104–Cys-131. A glycan (N-linked (GlcNAc...) asparagine) is linked at Asn-53.

It belongs to the seminal plasma protein family. As to expression, expressed only in the epididymis.

It is found in the secreted. Its function is as follows. Binds sperm in vitro and promotes sperm capacitation. Specifically promotes capacitation induced by high density lipoproteins (HDLs). Also binds heparin, phospholipid liposomes, and weakly to gelatin. Does not bind chondroitin sulfate B. The protein is Binder of sperm protein homolog 1 (BSPH1) of Homo sapiens (Human).